The following is a 275-amino-acid chain: Probable siderophore transport system ATP-binding protein YusV (275 aa).

The region spanning 6 to 242 (ISTETLSLGY…DLVQNVFSMN (237 aa)) is the ABC transporter domain. Residue 38-45 (GSNGCGKS) participates in ATP binding.

The protein belongs to the ABC transporter superfamily. As to quaternary structure, the iron-hydroxamate siderophore complex is composed of one ATP-binding protein (YusV), two transmembrane proteins (YfiZ and YfhA) and a solute-binding protein (YfiY); the catechoplate siderophore complex is composed of one ATP-binding protein (YusV), two transmembrane proteins (FeuB and FeuC) and a solute-binding protein (FeuA).

It is found in the cell membrane. Functionally, provides the ATPase subunit for at least 2 ABC transporter complexes; YfiYZ/YfhA/YusV involved in import of the iron-hydroxamate siderophores schizokinen, arthrobactin and corprogen, and FeuABC/YusV involved in import of the catecholate siderophores bacillibactin and enterobactin. Probably responsible for energy coupling to the transport system. This chain is Probable siderophore transport system ATP-binding protein YusV (yusV), found in Bacillus subtilis (strain 168).